We begin with the raw amino-acid sequence, 143 residues long: MAKKIDGYIKLQVPAGKANPSPPIGPALGQKGVNIMAFCKEFNAATASMEPGLPIPTEITVYADKSFTFIMKSPPAAFLLRKAAGIAKGSGVPNTTKVGKVTRAQLEEIVQTKNADLTAADLDAAVRTIAGTARSMGIDVEGV.

This sequence belongs to the universal ribosomal protein uL11 family. As to quaternary structure, part of the ribosomal stalk of the 50S ribosomal subunit. Interacts with L10 and the large rRNA to form the base of the stalk. L10 forms an elongated spine to which L12 dimers bind in a sequential fashion forming a multimeric L10(L12)X complex. Post-translationally, one or more lysine residues are methylated.

Its function is as follows. Forms part of the ribosomal stalk which helps the ribosome interact with GTP-bound translation factors. The chain is Large ribosomal subunit protein uL11 from Psychrobacter sp. (strain PRwf-1).